The primary structure comprises 249 residues: ATP synthase subunit a, chloroplastic (249 aa).

5 helical membrane-spanning segments follow: residues 40 to 60 (QVLI…VLAI), 97 to 117 (VPFI…GALL), 136 to 156 (INTT…AGLS), 201 to 221 (LVVV…VMFL), and 222 to 242 (GLFT…AYIG).

The protein belongs to the ATPase A chain family. F-type ATPases have 2 components, CF(1) - the catalytic core - and CF(0) - the membrane proton channel. CF(1) has five subunits: alpha(3), beta(3), gamma(1), delta(1), epsilon(1). CF(0) has four main subunits: a, b, b' and c.

It is found in the plastid. The protein localises to the chloroplast thylakoid membrane. Functionally, key component of the proton channel; it plays a direct role in the translocation of protons across the membrane. The polypeptide is ATP synthase subunit a, chloroplastic (Nasturtium officinale (Watercress)).